A 53-amino-acid chain; its full sequence is Conotoxin Ac4.3b (53 aa).

A propeptide spanning residues 1-11 is cleaved from the precursor; that stretch reads SDVRNAAVHER. Q12 carries the post-translational modification Pyrrolidone carboxylic acid. Residue E14 is modified to 4-carboxyglutamate. S18 is a glycosylation site (O-linked (HexNAc...) serine). A 4-hydroxyproline mark is found at P28, P33, and P48. Proline amide is present on P48. A propeptide spanning residues 49–53 is cleaved from the precursor; it reads GRRND.

It belongs to the conotoxin A superfamily. Contains 3 disulfide bonds. As to expression, expressed by the venom duct.

The protein resides in the secreted. Probable neurotoxin with ion channel inhibitor activity. The protein is Conotoxin Ac4.3b of Conus achatinus (Little frog cone).